Consider the following 68-residue polypeptide: uncharacterized protein (68 aa).

The 66-residue stretch at 2 to 67 folds into the HMA domain; sequence KTITLNIKGI…VIEDAGFDAT (66 aa). The a metal cation site is built by Cys-13 and Cys-16.

This is an uncharacterized protein from Haemophilus influenzae (strain ATCC 51907 / DSM 11121 / KW20 / Rd).